The following is a 365-amino-acid chain: DNA replication and repair protein RecF (365 aa).

Residue 30–37 (GRNAQGKT) participates in ATP binding.

The protein belongs to the RecF family.

Its subcellular location is the cytoplasm. The RecF protein is involved in DNA metabolism; it is required for DNA replication and normal SOS inducibility. RecF binds preferentially to single-stranded, linear DNA. It also seems to bind ATP. In Streptococcus pneumoniae (strain CGSP14), this protein is DNA replication and repair protein RecF.